Consider the following 96-residue polypeptide: SAGA complex subunit SUS1 (96 aa).

Residue lysine 68 forms a Glycyl lysine isopeptide (Lys-Gly) (interchain with G-Cter in ubiquitin) linkage.

The protein belongs to the ENY2 family. Component of the 1.8 MDa SAGA (Spt-Ada-Gcn5 acetyltransferase) complex, which is composed of 19 subunits TRA1, SPT7, TAF5, NGG1/ADA3, SGF73, SPT20/ADA5, SPT8, TAF12, TAF6, HFI1/ADA1, UBP8, GCN5, ADA2, SPT3, SGF29, TAF10, TAF9, SGF11 and SUS1. The SAGA complex is composed of 4 modules, namely the HAT (histone acetyltransferase) module (GCN5, ADA2, NGG1/ADA3 and SGF29), the DUB (deubiquitinating) module (UBP8, SGF11, SGF73 and SUS1), the core or TAF (TBP-associated factor) module (TAF5, TAF6, TAF9, TAF10 and TAF12), and the Tra1 or SPT (Suppressor of Ty) module (TRA1, HFI1/ADA1, SPT3, SPT7, SPT8 and SPT20/ADA5). The Tra1/SPT module binds activators, the core module recruits TBP (TATA-binding protein), the HAT module contains the histone H3 acetyltransferase GCN5, and the DUB module comprises the histone H2B deubiquitinase UBP8. Also identified in an altered form of SAGA, named SALSA (SAGA altered, Spt8 absent) or SLIK (SAGA-like) complex, which contains a C-terminal truncated form of SPT7 and is missing SPT8. However, it has been shown that the SAGA and SAGA-like SALSA/SLIK transcriptional coactivators are structurally and biochemically equivalent. Component of the nuclear pore complex (NPC)-associated TREX-2 complex (transcription and export complex 2), composed of at least SUS1, SAC3, THP1, SEM1, and CDC31. TREX-2 contains 2 SUS1 chains. The TREX-2 complex interacts with the mRNA export factors MEX67, MTR2 and SUB2, and the nucleoporin NUP1. Interacts directly with THP1, SAC3. Interacts directly with SGF11 and UBP8. Interacts with YRA1, MEX67 and with the RNA polymerase II.

It localises to the nucleus. The protein resides in the nucleoplasm. Its subcellular location is the cytoplasm. It is found in the P-body. Its function is as follows. Involved in mRNA export coupled transcription activation by association with both the TREX-2 and the SAGA complexes. SAGA acts as a general cofactor required for essentially all RNA polymerase II transcription. At the promoters, SAGA is required for transcription pre-initiation complex (PIC) recruitment. It influences RNA polymerase II transcriptional activity through different activities such as TBP interaction (via core/TAF module) and promoter selectivity, interaction with transcription activators (via Tra1/SPT module), and chromatin modification through histone acetylation (via HAT module) and deubiquitination (via DUB module). SAGA preferentially acetylates histones H3 (to form H3K9ac, H3K14ac, H3K18ac and H3K23ac) and H2B and deubiquitinates histone H2B. SAGA interacts with DNA via upstream activating sequences (UASs). Also identified in a modified version of SAGA named SALSA or SLIK. The cleavage of SPT7 and the absence of the SPT8 subunit in SLIK neither drive any major conformational differences in its structure compared with SAGA, nor significantly affect HAT, DUB, or DNA-binding activities. Within the SAGA complex, participates in a subcomplex with SGF11, SGF73 and UBP8 required for deubiquitination of H2B and for the maintenance of steady-state H3 methylation levels. The TREX-2 complex functions in docking export-competent ribonucleoprotein particles (mRNPs) to the nuclear entrance of the nuclear pore complex (nuclear basket), by association with components of the nuclear mRNA export machinery (MEX67-MTR2 and SUB2) in the nucleoplasm and the nucleoporin NUP1 at the nuclear basket. TREX-2 participates in mRNA export and accurate chromatin positioning in the nucleus by tethering genes to the nuclear periphery. SUS1 also has a role in mRNP biogenesis and maintenance of genome integrity through preventing RNA-mediated genome instability. Has a role in response to DNA damage induced by methyl methane sulfonate (MMS) and replication arrest induced by hydroxyurea. May also be involved in cytoplasmic mRNA decay by interaction with components of P-bodies. The polypeptide is SAGA complex subunit SUS1 (Saccharomyces cerevisiae (strain ATCC 204508 / S288c) (Baker's yeast)).